A 389-amino-acid chain; its full sequence is MSKNIKILVIGAGVAGPAVCYWLRRFGFSPVLIEKYASIRKGGQALDVRGIATHIAREMGIYDQICEMRTRIERGRFVDSSGKVLHEEQGEKFGFRQDDEVEILRGDLVEILMKTIADVPCYFNQSIISIEQNADNVTVIFMDGRIEQYDLVIAADGIHSAIRRMIFEKNEYQLIHLGAYLSTFTIPNYLGLSHIDLECEANNKLVSINSDNNPEIARAGFMFRSQHLLNDIRDEQEQKQFLRDTFRDFGWETQNILNRMPESNDFYFDAITQVKMNSWTKGRIALVGDAGYCPSPLSGQGNNLAFVGAYILAGELKVANGNYTRAFTRYNALLRSFVDANQKFGVWVSESFLVKDEVSKEIAEERSNKILAMIKSISNGITLPQYESS.

FAD is bound by residues 12–15 (AGVA), 34–35 (EK), Q44, R105, Y267, and D289.

It belongs to the aromatic-ring hydroxylase family. The cofactor is FAD.

The catalysed reaction is a tetracycline + NADPH + O2 + H(+) = a (1S,10aS)-3-(CONH2)-1-(Me2N)-3,3a,4,6-(HO)4-2,5-dioxo-1H,10aH,11H,11aH-cyclopenta[b]anthracene + CO + NADP(+) + H2O. It catalyses the reaction 7-chlorotetracycline + NADPH + O2 + H(+) = (1S,10S,10aS)-3-(CONH2)-9-Cl-1-(Me2N)-3,3a,4,10-(HO)4-10-Me-2,5-dioxo-1H,10aH,11H,11aH-cyclopenta[b]anthracen-6-olate + CO + NADP(+) + H2O. Its activity is regulated as follows. Inhibited by anhydrotetracycline. In terms of biological role, an FAD-requiring monooxygenase active on tetracycline antibiotic and some of its derivatives, which leads to their inactivation. Expression in E.coli confers high resistance to tetracycline and oxytetracycline, does not confer resistance to minocycline or tigecycline. The reaction requires NADPH. Expression in L.pneumophila confers resistance to tetracycline. Degrades and confers resistance to tetracycline and chlortetracycline. The polypeptide is Flavin-dependent monooxygenase (tet(56)) (Legionella longbeachae serogroup 1 (strain NSW150)).